The primary structure comprises 160 residues: Ribosomal RNA large subunit methyltransferase H (160 aa).

S-adenosyl-L-methionine contacts are provided by residues Leu-77, Gly-109, and 128 to 133 (LSNLTF).

This sequence belongs to the RNA methyltransferase RlmH family. Homodimer.

It is found in the cytoplasm. It catalyses the reaction pseudouridine(1915) in 23S rRNA + S-adenosyl-L-methionine = N(3)-methylpseudouridine(1915) in 23S rRNA + S-adenosyl-L-homocysteine + H(+). Specifically methylates the pseudouridine at position 1915 (m3Psi1915) in 23S rRNA. The polypeptide is Ribosomal RNA large subunit methyltransferase H (Desulforamulus reducens (strain ATCC BAA-1160 / DSM 100696 / MI-1) (Desulfotomaculum reducens)).